The primary structure comprises 63 residues: Megourin-3 (63 aa).

As to quaternary structure, monomer. Post-translationally, contains four disulfide bonds.

The protein localises to the secreted. Functionally, has antimicrobial activity against Gram-positive bacteria and fungi. This chain is Megourin-3, found in Megoura viciae (Vetch aphid).